Here is a 95-residue protein sequence, read N- to C-terminus: Phosphoribosyl-ATP pyrophosphatase (95 aa).

The protein belongs to the PRA-PH family.

The protein resides in the cytoplasm. The enzyme catalyses 1-(5-phospho-beta-D-ribosyl)-ATP + H2O = 1-(5-phospho-beta-D-ribosyl)-5'-AMP + diphosphate + H(+). The protein operates within amino-acid biosynthesis; L-histidine biosynthesis; L-histidine from 5-phospho-alpha-D-ribose 1-diphosphate: step 2/9. The polypeptide is Phosphoribosyl-ATP pyrophosphatase (Halobacterium salinarum (strain ATCC 29341 / DSM 671 / R1)).